A 906-amino-acid polypeptide reads, in one-letter code: Protein kintoun (906 aa).

Serine 376 carries the phosphoserine modification. 2 disordered regions span residues 614–691 (QQQK…RKQR) and 793–906 (RKKN…DEDM). The span at 618-631 (KLNKKQRKRNKKQR) shows a compositional bias: basic residues. Over residues 639-655 (EELKAAQEELQLQHEKQ) the composition is skewed to basic and acidic residues. Residues 793–808 (RKKNQKRRDCKLRAQQ) are compositionally biased toward basic residues. Phosphoserine is present on serine 812. The segment covering 837 to 850 (ANAQYFKQPNNNNG) has biased composition (polar residues). Composition is skewed to basic and acidic residues over residues 851–865 (HDQD…HDSG) and 875–887 (NNEE…EADA). Positions 894 to 906 (EMDDDDEDEDEDM) are enriched in acidic residues.

Belongs to the PIH1 family. Kintoun subfamily. In terms of assembly, interacts with Pp1alpha-96A, Pp1-87B, Pp1-13C and flw.

It is found in the cytoplasm. Required for cytoplasmic pre-assembly of axonemal dyneins, thereby playing a central role in motility in cilia and flagella. Involved in pre-assembly of dynein arm complexes in the cytoplasm before intraflagellar transport loads them for the ciliary compartment. In Drosophila virilis (Fruit fly), this protein is Protein kintoun.